Here is a 105-residue protein sequence, read N- to C-terminus: Small ribosomal subunit protein uS10 (105 aa).

It belongs to the universal ribosomal protein uS10 family. As to quaternary structure, part of the 30S ribosomal subunit.

Involved in the binding of tRNA to the ribosomes. This chain is Small ribosomal subunit protein uS10, found in Synechococcus elongatus (strain ATCC 33912 / PCC 7942 / FACHB-805) (Anacystis nidulans R2).